Consider the following 148-residue polypeptide: MGTYTPLIYNIYNVHIWVFTESQGQIGQMSPRGKMETAVSQGQHKQLKDGHQHKGRKLSEEIASLLRLKECRRLNPASYYTPRRTSQSQSLSGSTFKEYNEYINEKDSSRAQRQNAAAVLSKLAHDFWENDCVIDEDIFEDSSDEEQS.

A phosphoserine mark is found at serine 59 and serine 86.

It is found in the cytoplasmic granule. The protein localises to the cytoplasm. Its function is as follows. Putative cyclin-dependent kinase (CDK) inhibitor necessary and sufficient for PHO pathway-dependent down-regulation of low-affinity phosphate transport. The sequence is that of Putative cyclin-dependent kinase inhibitor SPL2 (SPL2) from Saccharomyces cerevisiae (strain ATCC 204508 / S288c) (Baker's yeast).